A 478-amino-acid polypeptide reads, in one-letter code: V-type ATP synthase beta chain (478 aa).

Belongs to the ATPase alpha/beta chains family.

Produces ATP from ADP in the presence of a proton gradient across the membrane. The V-type beta chain is a regulatory subunit. This Thermus thermophilus (strain ATCC BAA-163 / DSM 7039 / HB27) protein is V-type ATP synthase beta chain.